Consider the following 1117-residue polypeptide: Mitochondrial protein cyt-4 (1117 aa).

One can recognise an RNB domain in the interval 561–916; it reads RQDFYTSTVY…LVHWQIQAAL (356 aa). Residues 705 to 730 form a disordered region; that stretch reads VVLEVGTPPSAEDEAPTRKMTKPDEL. A compositionally biased stretch (basic and acidic residues) spans 719–730; the sequence is APTRKMTKPDEL.

The protein belongs to the RNR ribonuclease family. Homodimer.

The protein localises to the mitochondrion. In terms of biological role, required for RNA 5'- and 3'-end processing and splicing. May act on the RNA processing enzymes directly, or it may act on other regulatory molecules, which influence the activity or synthesis of these enzymes. The polypeptide is Mitochondrial protein cyt-4 (cyt-4) (Neurospora crassa (strain ATCC 24698 / 74-OR23-1A / CBS 708.71 / DSM 1257 / FGSC 987)).